A 209-amino-acid chain; its full sequence is Uracil phosphoribosyltransferase (209 aa).

5-phospho-alpha-D-ribose 1-diphosphate is bound by residues arginine 79, arginine 104, and 131–139 (DPMLATGGS). Uracil-binding positions include isoleucine 194 and 199–201 (GDA). Aspartate 200 lines the 5-phospho-alpha-D-ribose 1-diphosphate pocket.

This sequence belongs to the UPRTase family. The cofactor is Mg(2+).

The catalysed reaction is UMP + diphosphate = 5-phospho-alpha-D-ribose 1-diphosphate + uracil. It functions in the pathway pyrimidine metabolism; UMP biosynthesis via salvage pathway; UMP from uracil: step 1/1. Its activity is regulated as follows. Allosterically activated by GTP. In terms of biological role, catalyzes the conversion of uracil and 5-phospho-alpha-D-ribose 1-diphosphate (PRPP) to UMP and diphosphate. This Bacillus licheniformis (strain ATCC 14580 / DSM 13 / JCM 2505 / CCUG 7422 / NBRC 12200 / NCIMB 9375 / NCTC 10341 / NRRL NRS-1264 / Gibson 46) protein is Uracil phosphoribosyltransferase.